A 607-amino-acid polypeptide reads, in one-letter code: Elongation factor 4 (607 aa).

Residues 11–193 enclose the tr-type G domain; sequence SKIRNFSIIA…QIVEKVPAPT (183 aa). Residues 23–28 and 140–143 each bind GTP; these read DHGKST and NKID.

Belongs to the TRAFAC class translation factor GTPase superfamily. Classic translation factor GTPase family. LepA subfamily.

It localises to the cell membrane. It carries out the reaction GTP + H2O = GDP + phosphate + H(+). Its function is as follows. Required for accurate and efficient protein synthesis under certain stress conditions. May act as a fidelity factor of the translation reaction, by catalyzing a one-codon backward translocation of tRNAs on improperly translocated ribosomes. Back-translocation proceeds from a post-translocation (POST) complex to a pre-translocation (PRE) complex, thus giving elongation factor G a second chance to translocate the tRNAs correctly. Binds to ribosomes in a GTP-dependent manner. This Bacillus cereus (strain Q1) protein is Elongation factor 4.